The sequence spans 60 residues: MANKLEITLKRSVIGRPEDQRVTVRTLGLKKTNQTVVHEDNAAIRGMINKVSHLVSVKEQ.

The protein belongs to the universal ribosomal protein uL30 family. Part of the 50S ribosomal subunit.

This Bacillus pumilus (strain SAFR-032) protein is Large ribosomal subunit protein uL30.